We begin with the raw amino-acid sequence, 113 residues long: Large ribosomal subunit protein uL22 (113 aa).

It belongs to the universal ribosomal protein uL22 family. In terms of assembly, part of the 50S ribosomal subunit.

In terms of biological role, this protein binds specifically to 23S rRNA; its binding is stimulated by other ribosomal proteins, e.g. L4, L17, and L20. It is important during the early stages of 50S assembly. It makes multiple contacts with different domains of the 23S rRNA in the assembled 50S subunit and ribosome. Its function is as follows. The globular domain of the protein is located near the polypeptide exit tunnel on the outside of the subunit, while an extended beta-hairpin is found that lines the wall of the exit tunnel in the center of the 70S ribosome. This is Large ribosomal subunit protein uL22 from Bacillus cereus (strain ATCC 10987 / NRS 248).